A 152-amino-acid chain; its full sequence is Transcriptional repressor NrdR (152 aa).

The segment at 3-34 is a zinc-finger region; the sequence is CPYCQHPDSDVIDTRKLHNGETIRRRRKCEAC. Residues 49–139 form the ATP-cone domain; sequence ITVVKKNGER…VYRSFADIGK (91 aa).

Belongs to the NrdR family. Requires Zn(2+) as cofactor.

Negatively regulates transcription of bacterial ribonucleotide reductase nrd genes and operons by binding to NrdR-boxes. This is Transcriptional repressor NrdR from Roseiflexus sp. (strain RS-1).